The primary structure comprises 379 residues: uncharacterized protein (379 aa).

A helical transmembrane segment spans residues 9–26; sequence YFQLITTIFLISSITIAA.

The protein to A.liquefaciens L-sorbosone dehydrogenase.

It is found in the membrane. This is an uncharacterized protein from Borreliella burgdorferi (strain ATCC 35210 / DSM 4680 / CIP 102532 / B31) (Borrelia burgdorferi).